The sequence spans 371 residues: tRNA-specific 2-thiouridylase MnmA (371 aa).

ATP contacts are provided by residues 13–20 (GMSGGVDS) and methionine 39. Residues 99–101 (NPD) are interaction with target base in tRNA. The Nucleophile role is filled by cysteine 104. A disulfide bond links cysteine 104 and cysteine 200. Residue glycine 128 participates in ATP binding. Residues 150-152 (KDQ) are interaction with tRNA. Cysteine 200 functions as the Cysteine persulfide intermediate in the catalytic mechanism. The segment at 308–309 (RY) is interaction with tRNA.

This sequence belongs to the MnmA/TRMU family.

It is found in the cytoplasm. It carries out the reaction S-sulfanyl-L-cysteinyl-[protein] + uridine(34) in tRNA + AH2 + ATP = 2-thiouridine(34) in tRNA + L-cysteinyl-[protein] + A + AMP + diphosphate + H(+). Its function is as follows. Catalyzes the 2-thiolation of uridine at the wobble position (U34) of tRNA, leading to the formation of s(2)U34. This Geobacillus thermodenitrificans (strain NG80-2) protein is tRNA-specific 2-thiouridylase MnmA.